We begin with the raw amino-acid sequence, 211 residues long: Glycerol-3-phosphate acyltransferase (211 aa).

5 helical membrane-spanning segments follow: residues 10 to 30 (FTTW…FGLL), 63 to 83 (ALTL…IKFL), 90 to 110 (NIFI…PVWL), 126 to 146 (LGLY…LFLI), and 152 to 172 (LSAL…YPYL).

It belongs to the PlsY family. As to quaternary structure, probably interacts with PlsX.

It is found in the cell inner membrane. The enzyme catalyses an acyl phosphate + sn-glycerol 3-phosphate = a 1-acyl-sn-glycero-3-phosphate + phosphate. It participates in lipid metabolism; phospholipid metabolism. In terms of biological role, catalyzes the transfer of an acyl group from acyl-phosphate (acyl-PO(4)) to glycerol-3-phosphate (G3P) to form lysophosphatidic acid (LPA). This enzyme utilizes acyl-phosphate as fatty acyl donor, but not acyl-CoA or acyl-ACP. This Bartonella henselae (strain ATCC 49882 / DSM 28221 / CCUG 30454 / Houston 1) (Rochalimaea henselae) protein is Glycerol-3-phosphate acyltransferase.